The following is a 170-amino-acid chain: UPF0220 protein C8D2.02c (170 aa).

4 helical membrane passes run leucine 23–alanine 43, leucine 54–valine 74, isoleucine 101–isoleucine 121, and methionine 136–isoleucine 156.

This sequence belongs to the UPF0220 family.

The protein localises to the membrane. The protein is UPF0220 protein C8D2.02c of Schizosaccharomyces pombe (strain 972 / ATCC 24843) (Fission yeast).